A 161-amino-acid chain; its full sequence is uncharacterized protein (161 aa).

The first 35 residues, 1–35, serve as a signal peptide directing secretion; sequence MVMAMGFDTVVAAIMATAIIVAVAYTFLAGSTSIA.

This is an uncharacterized protein from Archaeoglobus fulgidus (strain ATCC 49558 / DSM 4304 / JCM 9628 / NBRC 100126 / VC-16).